We begin with the raw amino-acid sequence, 186 residues long: Small ribosomal subunit protein eS7 (186 aa).

This sequence belongs to the eukaryotic ribosomal protein eS7 family. Component of the small ribosomal subunit. Mature ribosomes consist of a small (40S) and a large (60S) subunit. The 40S subunit contains about 32 different proteins and 1 molecule of RNA (18S). The 60S subunit contains 45 different proteins and 3 molecules of RNA (25S, 5.8S and 5S).

The protein resides in the cytoplasm. Its function is as follows. Component of the ribosome, a large ribonucleoprotein complex responsible for the synthesis of proteins in the cell. The small ribosomal subunit (SSU) binds messenger RNAs (mRNAs) and translates the encoded message by selecting cognate aminoacyl-transfer RNA (tRNA) molecules. The large subunit (LSU) contains the ribosomal catalytic site termed the peptidyl transferase center (PTC), which catalyzes the formation of peptide bonds, thereby polymerizing the amino acids delivered by tRNAs into a polypeptide chain. The nascent polypeptides leave the ribosome through a tunnel in the LSU and interact with protein factors that function in enzymatic processing, targeting, and the membrane insertion of nascent chains at the exit of the ribosomal tunnel. RPS7A is involved in nucleolar processing of pre-18S ribosomal RNA and ribosome assembly. The sequence is that of Small ribosomal subunit protein eS7 (RPS7A) from Candida albicans (strain SC5314 / ATCC MYA-2876) (Yeast).